We begin with the raw amino-acid sequence, 511 residues long: Probable cytochrome P450 4d21 (511 aa).

Residue cysteine 456 coordinates heme.

The protein belongs to the cytochrome P450 family. Heme serves as cofactor.

The protein resides in the endoplasmic reticulum membrane. It localises to the microsome membrane. Functionally, may be involved in the metabolism of insect hormones and in the breakdown of synthetic insecticides. The sequence is that of Probable cytochrome P450 4d21 (Cyp4d21) from Drosophila melanogaster (Fruit fly).